We begin with the raw amino-acid sequence, 145 residues long: uncharacterized protein (145 aa).

The helical transmembrane segment at 97 to 117 threads the bilayer; sequence ISMLLLIVIIAIGLTISYMVI.

The protein resides in the membrane. This is an uncharacterized protein from Methanocaldococcus jannaschii (strain ATCC 43067 / DSM 2661 / JAL-1 / JCM 10045 / NBRC 100440) (Methanococcus jannaschii).